Consider the following 296-residue polypeptide: MSIFIDRETKVCVQGITGSEGSFWTKHMIDLGTDVICGVTPGKEGQMVEGIPVYHSVKNALKHHKIDATMLFVPPKMTKDAVFEALEAGIKKIVTIADGIPLHEMMEIRQRALEENAFVVGGNTSGVISPKEAMMGSFPHWIERVYKKGSIGVMTRSGSLTNEVTAMIVEAGYGVSSLIGVGGDPVPGARFAEFLPLYQKDPETKAVVIIGELGGTMEEEVAETILKGTFTKPLVAFLGGRTAPKGQKMGHAGAIITGGKGSVQNKIEMLEKAGAKVADRPRKVGKLLEELGVTKD.

Residues 17-20 (TGSE), lysine 43, and 96-98 (IAD) contribute to the CoA site. Histidine 251 acts as the Tele-phosphohistidine intermediate in catalysis.

The protein belongs to the succinate/malate CoA ligase alpha subunit family. Forms a complex with SqwK.

It carries out the reaction sulfoacetate + ATP + CoA = sulfoacetyl-CoA + ADP + phosphate. Functionally, part of a variant of the sulfo-TK pathway, a D-sulfoquinovose degradation pathway that produces sulfoacetate. Hydrolyzes sulfoacetyl-coenzyme A (sulfoacetyl-CoA) to produce sulfoacetate and CoA coupled with the phosphorylation of ADP to generate ATP. Cannot use succinate, acetate or 3-hydroxypropionate, and shows only residual activities with malonate and 3-sulfopropanoate. This is ADP-forming sulfoacetate-CoA ligase subunit SqwL from Acholeplasma sp.